Reading from the N-terminus, the 589-residue chain is Probable methyltransferase PMT23 (589 aa).

Topologically, residues 1 to 4 are cytoplasmic; the sequence is MAIS. The chain crosses the membrane as a helical; Signal-anchor for type II membrane protein span at residues 5-25; it reads VQHVVVLLLSTLLIAITFFLF. At 26–589 the chain is on the lumenal side; that stretch reads TSDNARFPFP…FWRPAKPELR (564 aa). 3 N-linked (GlcNAc...) asparagine glycosylation sites follow: N70, N375, and N442.

The protein belongs to the methyltransferase superfamily.

It is found in the golgi apparatus membrane. The protein is Probable methyltransferase PMT23 of Arabidopsis thaliana (Mouse-ear cress).